Here is a 165-residue protein sequence, read N- to C-terminus: Protein phosphatase 1 regulatory subunit 14C (165 aa).

The span at 1-12 (MSVATGSSETAG) shows a compositional bias: low complexity. Residues 1–73 (MSVATGSSET…QRRHQQGKVT (73 aa)) form a disordered region. Position 2 is an N-acetylserine (serine 2). At serine 25 the chain carries Phosphoserine. Arginine 27 is subject to Omega-N-methylarginine. Position 33 is a phosphoserine (serine 33). The span at 35 to 63 (GSSSGSGSSREDSAPVATAAAAGQVQQQQ) shows a compositional bias: low complexity. Threonine 73 carries the phosphothreonine; by ILK1 modification.

The protein belongs to the PP1 inhibitor family. Post-translationally, has over 600-fold higher inhibitory activity when phosphorylated, creating a molecular switch for regulating the phosphorylation status of PPP1CA substrates and smooth muscle contraction. The main inhibitory site appears to be Thr-73. Detected in breast cancer.

It localises to the cytoplasm. The protein resides in the membrane. Functionally, inhibitor of the PP1 regulatory subunit PPP1CA. The polypeptide is Protein phosphatase 1 regulatory subunit 14C (PPP1R14C) (Homo sapiens (Human)).